The sequence spans 473 residues: Maltose fermentation regulatory protein MAL63 (473 aa).

The zn(2)-C6 fungal-type DNA-binding region spans cysteine 8–cysteine 34. Residues lysine 41–arginine 49 carry the Nuclear localization signal motif.

This sequence belongs to the MAL13 family.

It is found in the nucleus. Functionally, regulates the coordinate transcription of structural MAL6S (maltase) and MAL6T (maltose permease) genes. This chain is Maltose fermentation regulatory protein MAL63 (MAL63), found in Saccharomyces cerevisiae (Baker's yeast).